Here is a 309-residue protein sequence, read N- to C-terminus: Homoserine kinase (309 aa).

91–101 (PIGSGLGSSAC) provides a ligand contact to ATP.

It belongs to the GHMP kinase family. Homoserine kinase subfamily.

It localises to the cytoplasm. It catalyses the reaction L-homoserine + ATP = O-phospho-L-homoserine + ADP + H(+). Its pathway is amino-acid biosynthesis; L-threonine biosynthesis; L-threonine from L-aspartate: step 4/5. Catalyzes the ATP-dependent phosphorylation of L-homoserine to L-homoserine phosphate. The polypeptide is Homoserine kinase (Klebsiella pneumoniae (strain 342)).